The following is a 269-amino-acid chain: 4-hydroxy-tetrahydrodipicolinate reductase (269 aa).

NAD(+)-binding positions include glycine 12–methionine 17, glycine 102–threonine 104, and serine 126–methionine 129. The Proton donor/acceptor role is filled by histidine 159. Residue histidine 160 participates in (S)-2,3,4,5-tetrahydrodipicolinate binding. The Proton donor role is filled by lysine 163. Glycine 169–threonine 170 contributes to the (S)-2,3,4,5-tetrahydrodipicolinate binding site.

The protein belongs to the DapB family.

The protein localises to the cytoplasm. It carries out the reaction (S)-2,3,4,5-tetrahydrodipicolinate + NAD(+) + H2O = (2S,4S)-4-hydroxy-2,3,4,5-tetrahydrodipicolinate + NADH + H(+). The catalysed reaction is (S)-2,3,4,5-tetrahydrodipicolinate + NADP(+) + H2O = (2S,4S)-4-hydroxy-2,3,4,5-tetrahydrodipicolinate + NADPH + H(+). The protein operates within amino-acid biosynthesis; L-lysine biosynthesis via DAP pathway; (S)-tetrahydrodipicolinate from L-aspartate: step 4/4. In terms of biological role, catalyzes the conversion of 4-hydroxy-tetrahydrodipicolinate (HTPA) to tetrahydrodipicolinate. The chain is 4-hydroxy-tetrahydrodipicolinate reductase from Leptospira borgpetersenii serovar Hardjo-bovis (strain JB197).